Here is a 169-residue protein sequence, read N- to C-terminus: Peptide methionine sulfoxide reductase MsrA (169 aa).

The active site involves Cys-13.

Belongs to the MsrA Met sulfoxide reductase family.

The enzyme catalyses L-methionyl-[protein] + [thioredoxin]-disulfide + H2O = L-methionyl-(S)-S-oxide-[protein] + [thioredoxin]-dithiol. The catalysed reaction is [thioredoxin]-disulfide + L-methionine + H2O = L-methionine (S)-S-oxide + [thioredoxin]-dithiol. Has an important function as a repair enzyme for proteins that have been inactivated by oxidation. Catalyzes the reversible oxidation-reduction of methionine sulfoxide in proteins to methionine. This Mycolicibacterium gilvum (strain PYR-GCK) (Mycobacterium gilvum (strain PYR-GCK)) protein is Peptide methionine sulfoxide reductase MsrA.